The sequence spans 150 residues: Lipoprotein signal peptidase (150 aa).

Helical transmembrane passes span V59–P79 and L84–I101. Catalysis depends on residues D111 and D125. A helical transmembrane segment spans residues I117–W137.

It belongs to the peptidase A8 family.

It localises to the cell membrane. It catalyses the reaction Release of signal peptides from bacterial membrane prolipoproteins. Hydrolyzes -Xaa-Yaa-Zaa-|-(S,diacylglyceryl)Cys-, in which Xaa is hydrophobic (preferably Leu), and Yaa (Ala or Ser) and Zaa (Gly or Ala) have small, neutral side chains.. It functions in the pathway protein modification; lipoprotein biosynthesis (signal peptide cleavage). Functionally, this protein specifically catalyzes the removal of signal peptides from prolipoproteins. This Moorella thermoacetica (strain ATCC 39073 / JCM 9320) protein is Lipoprotein signal peptidase.